Consider the following 293-residue polypeptide: Foldase protein PrsA 2 (293 aa).

An N-terminal signal peptide occupies residues 1–20 (MKKKLILGLVMMMALFSLAA). Cysteine 21 carries N-palmitoyl cysteine lipidation. A lipid anchor (S-diacylglycerol cysteine) is attached at cysteine 21. In terms of domain architecture, PpiC spans 135-226 (QPDITVSHIL…YGYHIIQMDK (92 aa)).

Belongs to the PrsA family.

Its subcellular location is the cell membrane. It catalyses the reaction [protein]-peptidylproline (omega=180) = [protein]-peptidylproline (omega=0). Plays a major role in protein secretion by helping the post-translocational extracellular folding of several secreted proteins. The chain is Foldase protein PrsA 2 from Listeria monocytogenes serotype 4b (strain F2365).